The chain runs to 274 residues: Large ribosomal subunit protein uL2c (274 aa).

The tract at residues 224-274 is disordered; sequence NPVDHPHGGGEGRAPIGRKKPTTPWGYPALGRKSRKRNKYSEKFILRHRSK.

This sequence belongs to the universal ribosomal protein uL2 family. Part of the 50S ribosomal subunit.

The protein resides in the plastid. It localises to the chloroplast. This Ipomoea purpurea (Common morning glory) protein is Large ribosomal subunit protein uL2c (rpl2).